The chain runs to 676 residues: DNA ligase (676 aa).

Residues 35 to 39 (DNEYD), 84 to 85 (SL), and Glu115 each bind NAD(+). The N6-AMP-lysine intermediate role is filled by Lys117. 4 residues coordinate NAD(+): Arg138, Glu177, Lys294, and Lys318. Residues Cys412, Cys415, Cys430, and Cys436 each coordinate Zn(2+). A BRCT domain is found at 595-676 (PTRQPLNGES…FLAFLAQYSA (82 aa)).

The protein belongs to the NAD-dependent DNA ligase family. LigA subfamily. Mg(2+) is required as a cofactor. Requires Mn(2+) as cofactor.

It carries out the reaction NAD(+) + (deoxyribonucleotide)n-3'-hydroxyl + 5'-phospho-(deoxyribonucleotide)m = (deoxyribonucleotide)n+m + AMP + beta-nicotinamide D-nucleotide.. In terms of biological role, DNA ligase that catalyzes the formation of phosphodiester linkages between 5'-phosphoryl and 3'-hydroxyl groups in double-stranded DNA using NAD as a coenzyme and as the energy source for the reaction. It is essential for DNA replication and repair of damaged DNA. This is DNA ligase from Acinetobacter baylyi (strain ATCC 33305 / BD413 / ADP1).